We begin with the raw amino-acid sequence, 102 residues long: Secretoglobin family 1D member (102 aa).

Residues 1-21 (MRLSVTALLVTLALCYYEANA) form the signal peptide. Asn87 carries an N-linked (GlcNAc...) asparagine glycan.

The protein belongs to the secretoglobin family. Lipophilin subfamily.

It localises to the secreted. May bind androgens and other steroids. May be under transcriptional regulation of steroid hormones. This chain is Secretoglobin family 1D member (SCGB1D), found in Bos taurus (Bovine).